Consider the following 574-residue polypeptide: K(+)/H(+) antiporter NhaP2 (574 aa).

A run of 13 helical transmembrane segments spans residues 6 to 26 (INSF…LSPV), 34 to 54 (ILLI…GGIL), 58 to 78 (YSTA…DGGM), 87 to 107 (VALW…TSIT), 109 to 129 (VMAA…GAIV), 173 to 193 (IAIL…ISFI), 196 to 216 (FGLG…LVNL), 219 to 239 (LAEG…YAAS), 242 to 262 (LGGS…NKPT), 271 to 291 (VLDG…GLLL), 299 to 319 (IWLP…PLAV), 335 to 355 (WFIS…VFPM), and 359 to 379 (LPGA…SLLV). The RCK C-terminal domain maps to 405-486 (SGVEIYPSSE…LEALSNLFSQ (82 aa)).

The protein belongs to the monovalent cation:proton antiporter 1 (CPA1) transporter (TC 2.A.36) family. NhaP2 subfamily.

It is found in the cell inner membrane. The catalysed reaction is K(+)(in) + H(+)(out) = K(+)(out) + H(+)(in). Its function is as follows. K(+)/H(+) antiporter that extrudes potassium in exchange for external protons and maintains the internal concentration of potassium under toxic levels. The chain is K(+)/H(+) antiporter NhaP2 from Shewanella sp. (strain ANA-3).